A 131-amino-acid chain; its full sequence is Large ribosomal subunit protein bL17 (131 aa).

This sequence belongs to the bacterial ribosomal protein bL17 family. As to quaternary structure, part of the 50S ribosomal subunit. Contacts protein L32.

The chain is Large ribosomal subunit protein bL17 from Bordetella avium (strain 197N).